Consider the following 184-residue polypeptide: ATP synthase subunit b, chloroplastic (184 aa).

A helical transmembrane segment spans residues 27–49; it reads LATNPINLSVVLGVLIFFGKGVL.

The protein belongs to the ATPase B chain family. As to quaternary structure, F-type ATPases have 2 components, F(1) - the catalytic core - and F(0) - the membrane proton channel. F(1) has five subunits: alpha(3), beta(3), gamma(1), delta(1), epsilon(1). F(0) has four main subunits: a(1), b(1), b'(1) and c(10-14). The alpha and beta chains form an alternating ring which encloses part of the gamma chain. F(1) is attached to F(0) by a central stalk formed by the gamma and epsilon chains, while a peripheral stalk is formed by the delta, b and b' chains.

The protein resides in the plastid. It is found in the chloroplast thylakoid membrane. Its function is as follows. F(1)F(0) ATP synthase produces ATP from ADP in the presence of a proton or sodium gradient. F-type ATPases consist of two structural domains, F(1) containing the extramembraneous catalytic core and F(0) containing the membrane proton channel, linked together by a central stalk and a peripheral stalk. During catalysis, ATP synthesis in the catalytic domain of F(1) is coupled via a rotary mechanism of the central stalk subunits to proton translocation. Component of the F(0) channel, it forms part of the peripheral stalk, linking F(1) to F(0). This Phalaenopsis aphrodite subsp. formosana (Moth orchid) protein is ATP synthase subunit b, chloroplastic.